The following is a 378-amino-acid chain: GDP-mannose-dependent alpha-mannosyltransferase (378 aa).

This sequence belongs to the glycosyltransferase group 1 family. Glycosyltransferase 4 subfamily.

It functions in the pathway phospholipid metabolism; phosphatidylinositol metabolism. Its function is as follows. Catalyzes the addition of a mannose residue from GDP-D-mannose to GlcAGroAc2 to generate 1,2-di-O-C16/C18:1-(alpha-D-mannopyranosyl)-(1-4)-(alpha-D-glucopyranosyluronic acid)-(1-3)-glycerol(ManGlcAGroAc2). This Mycobacterium tuberculosis (strain CDC 1551 / Oshkosh) protein is GDP-mannose-dependent alpha-mannosyltransferase (mgtA).